We begin with the raw amino-acid sequence, 1783 residues long: Doublecortin domain-containing protein 1 (1783 aa).

Positions 93 to 133 (GLQDCSTHQTASDHSHDEISDLDSYKSNSKNNSCSISASKR) are disordered. Residues 117-131 (YKSNSKNNSCSISAS) show a composition bias toward low complexity. Positions 168-252 (KLQPRVIKVT…FLNPFKKIKD (85 aa)) constitute a Doublecortin 1 domain. A Ricin B-type lectin 1 domain is found at 702–800 (WLITKTGMIL…HIHHGAWTTA (99 aa)). The segment at 860 to 880 (ASAQRWAIKHEGTSKPGQWKH) is disordered. The Doublecortin 2 domain maps to 925–1015 (PICKTTEPYA…ELWINPDLSI (91 aa)). One can recognise a Ricin B-type lectin 2 domain in the interval 1151–1266 (SCSPKHSKLH…GAANQKWHYM (116 aa)).

In terms of assembly, interacts with dynein intermediate chain, tubulin, RAB8A, RAB3IP, NUDC, PAFAH1B1 and DCTN1.

The protein resides in the midbody. It is found in the midbody ring. It localises to the cytoplasm. The protein localises to the cytoskeleton. Its subcellular location is the spindle. In terms of biological role, microtubule-binding protein which plays an important role in mediating dynein-dependent transport of RAB8A-positive vesicles to the midbody during cytokinesis. The chain is Doublecortin domain-containing protein 1 from Homo sapiens (Human).